The sequence spans 96 residues: Integration host factor subunit beta (96 aa).

The protein belongs to the bacterial histone-like protein family. Heterodimer of an alpha and a beta chain.

In terms of biological role, this protein is one of the two subunits of integration host factor, a specific DNA-binding protein that functions in genetic recombination as well as in transcriptional and translational control. The chain is Integration host factor subunit beta from Methylocella silvestris (strain DSM 15510 / CIP 108128 / LMG 27833 / NCIMB 13906 / BL2).